The chain runs to 312 residues: MSSSGSSHPFLLTGFPGLEEAHHWISVFFLFMYISILFGNGTLLLLIKEDHNLHEPMYFFLAMLAATDLGLALTTMPTVLGVLWLDHREIGSAACFSQAYFIHSLSFLESGILLAMAYDRFIAICNPLRYTSVLTNTRVVKIGLGVLMRGFVSVVPPIRPLYFFLYCHSHVLSHAFCLHQDVIKLACADTTFNRLYPAVLVVFIFVLDYLIIFISYVLILKTVLSIASREERAKALITCVSHICCVLVFYVTVIGLSLIHRFGKQVPHIVHLIMSYAYFLFPPLMNPITYSVKTKQIQNAILHLFTTHRIGT.

Residues 1–23 (MSSSGSSHPFLLTGFPGLEEAHH) are Extracellular-facing. A helical transmembrane segment spans residues 24–44 (WISVFFLFMYISILFGNGTLL). Residues 45-52 (LLIKEDHN) are Cytoplasmic-facing. Residues 53-73 (LHEPMYFFLAMLAATDLGLAL) form a helical membrane-spanning segment. The Extracellular portion of the chain corresponds to 74–97 (TTMPTVLGVLWLDHREIGSAACFS). Residues Cys-95 and Cys-187 are joined by a disulfide bond. The chain crosses the membrane as a helical span at residues 98 to 118 (QAYFIHSLSFLESGILLAMAY). Residues 119-137 (DRFIAICNPLRYTSVLTNT) are Cytoplasmic-facing. A helical transmembrane segment spans residues 138 to 158 (RVVKIGLGVLMRGFVSVVPPI). The Extracellular portion of the chain corresponds to 159-194 (RPLYFFLYCHSHVLSHAFCLHQDVIKLACADTTFNR). Residues 195 to 215 (LYPAVLVVFIFVLDYLIIFIS) form a helical membrane-spanning segment. Topologically, residues 216–235 (YVLILKTVLSIASREERAKA) are cytoplasmic. Residues 236-256 (LITCVSHICCVLVFYVTVIGL) form a helical membrane-spanning segment. Residues 257–271 (SLIHRFGKQVPHIVH) are Extracellular-facing. The chain crosses the membrane as a helical span at residues 272 to 292 (LIMSYAYFLFPPLMNPITYSV). The Cytoplasmic segment spans residues 293 to 312 (KTKQIQNAILHLFTTHRIGT).

Belongs to the G-protein coupled receptor 1 family.

It is found in the cell membrane. Its function is as follows. Odorant receptor. This chain is Olfactory receptor 51B5 (OR51B5), found in Homo sapiens (Human).